The primary structure comprises 744 residues: 1,4-alpha-glucan branching enzyme GlgB (744 aa).

Residues 1-23 (MSGPEDPADRRHGEVPAPRRDIP) form a disordered region. Positions 7–23 (PADRRHGEVPAPRRDIP) are enriched in basic and acidic residues. Aspartate 424 functions as the Nucleophile in the catalytic mechanism. The active-site Proton donor is glutamate 476.

It belongs to the glycosyl hydrolase 13 family. GlgB subfamily. Monomer.

The catalysed reaction is Transfers a segment of a (1-&gt;4)-alpha-D-glucan chain to a primary hydroxy group in a similar glucan chain.. Its pathway is glycan biosynthesis; glycogen biosynthesis. Its function is as follows. Catalyzes the formation of the alpha-1,6-glucosidic linkages in glycogen by scission of a 1,4-alpha-linked oligosaccharide from growing alpha-1,4-glucan chains and the subsequent attachment of the oligosaccharide to the alpha-1,6 position. This is 1,4-alpha-glucan branching enzyme GlgB from Nocardia farcinica (strain IFM 10152).